Consider the following 345-residue polypeptide: Dihydroorotase (345 aa).

Positions 13 and 15 each coordinate Zn(2+). Residues 15–17 (HFR) and Asn41 contribute to the substrate site. Positions 98, 135, and 173 each coordinate Zn(2+). At Lys98 the chain carries N6-carboxylysine. Position 135 (His135) interacts with substrate. Leu218 serves as a coordination point for substrate. Asp246 lines the Zn(2+) pocket. Asp246 is a catalytic residue. Residues His250 and Ala262 each contribute to the substrate site.

This sequence belongs to the metallo-dependent hydrolases superfamily. DHOase family. Class II DHOase subfamily. In terms of assembly, homodimer. It depends on Zn(2+) as a cofactor.

It carries out the reaction (S)-dihydroorotate + H2O = N-carbamoyl-L-aspartate + H(+). It functions in the pathway pyrimidine metabolism; UMP biosynthesis via de novo pathway; (S)-dihydroorotate from bicarbonate: step 3/3. In terms of biological role, catalyzes the reversible cyclization of carbamoyl aspartate to dihydroorotate. In Shewanella pealeana (strain ATCC 700345 / ANG-SQ1), this protein is Dihydroorotase.